Reading from the N-terminus, the 388-residue chain is Carbamoyl phosphate synthase small chain (388 aa).

A CPSase region spans residues 1–198 (MSQDLLPGVT…WPEGYAKLDK (198 aa)). Residues Ser53, Gly250, and Gly252 each contribute to the L-glutamine site. Positions 202-388 (EVVVIDYGVK…RFAGLMDAAK (187 aa)) constitute a Glutamine amidotransferase type-1 domain. The active-site Nucleophile is the Cys279. L-glutamine contacts are provided by Leu280, Gln283, Asn321, Gly323, and Phe324. Catalysis depends on residues His363 and Glu365.

It belongs to the CarA family. As to quaternary structure, composed of two chains; the small (or glutamine) chain promotes the hydrolysis of glutamine to ammonia, which is used by the large (or ammonia) chain to synthesize carbamoyl phosphate. Tetramer of heterodimers (alpha,beta)4.

It catalyses the reaction hydrogencarbonate + L-glutamine + 2 ATP + H2O = carbamoyl phosphate + L-glutamate + 2 ADP + phosphate + 2 H(+). The catalysed reaction is L-glutamine + H2O = L-glutamate + NH4(+). The protein operates within amino-acid biosynthesis; L-arginine biosynthesis; carbamoyl phosphate from bicarbonate: step 1/1. It participates in pyrimidine metabolism; UMP biosynthesis via de novo pathway; (S)-dihydroorotate from bicarbonate: step 1/3. In terms of biological role, small subunit of the glutamine-dependent carbamoyl phosphate synthetase (CPSase). CPSase catalyzes the formation of carbamoyl phosphate from the ammonia moiety of glutamine, carbonate, and phosphate donated by ATP, constituting the first step of 2 biosynthetic pathways, one leading to arginine and/or urea and the other to pyrimidine nucleotides. The small subunit (glutamine amidotransferase) binds and cleaves glutamine to supply the large subunit with the substrate ammonia. This Caulobacter vibrioides (strain ATCC 19089 / CIP 103742 / CB 15) (Caulobacter crescentus) protein is Carbamoyl phosphate synthase small chain.